We begin with the raw amino-acid sequence, 253 residues long: DNA repair protein RecO (253 aa).

This sequence belongs to the RecO family.

In terms of biological role, involved in DNA repair and RecF pathway recombination. In Symbiobacterium thermophilum (strain DSM 24528 / JCM 14929 / IAM 14863 / T), this protein is DNA repair protein RecO.